Reading from the N-terminus, the 98-residue chain is Hainantoxin-XVII (98 aa).

Positions 1-40 (MTTVGVSLFRRSPEKITMKIATFLGLSFLLIASYVLICEA) are cleaved as a signal peptide. The propeptide occupies 41 to 64 (QHPGFQELLILEENMRDPENSKER). Cystine bridges form between C66–C81, C73–C85, and C80–C95.

The protein belongs to the hainantoxin family. 17 subfamily. As to expression, expressed by the venom gland.

It is found in the secreted. Its function is as follows. Putative ion channel inhibitor. The polypeptide is Hainantoxin-XVII (Cyriopagopus hainanus (Chinese bird spider)).